The chain runs to 248 residues: uncharacterized protein (248 aa).

9–33 provides a ligand contact to NADP(+); it reads IITGASSGIGEATAILLAEKGAKLV. Ser-141 contacts substrate. Tyr-154 functions as the Proton acceptor in the catalytic mechanism.

Belongs to the short-chain dehydrogenases/reductases (SDR) family.

This is an uncharacterized protein from Listeria innocua serovar 6a (strain ATCC BAA-680 / CLIP 11262).